A 172-amino-acid polypeptide reads, in one-letter code: Ribosome maturation factor RimM (172 aa).

The 73-residue stretch at 96–168 (DGEFYYHEII…RVQVELMEGL (73 aa)) folds into the PRC barrel domain.

This sequence belongs to the RimM family. As to quaternary structure, binds ribosomal protein uS19.

It localises to the cytoplasm. Functionally, an accessory protein needed during the final step in the assembly of 30S ribosomal subunit, possibly for assembly of the head region. Essential for efficient processing of 16S rRNA. May be needed both before and after RbfA during the maturation of 16S rRNA. It has affinity for free ribosomal 30S subunits but not for 70S ribosomes. This Streptococcus agalactiae serotype III (strain NEM316) protein is Ribosome maturation factor RimM.